A 419-amino-acid chain; its full sequence is UDP-N-acetylglucosamine 1-carboxyvinyltransferase (419 aa).

22 to 23 lines the phosphoenolpyruvate pocket; sequence KN. R91 provides a ligand contact to UDP-N-acetyl-alpha-D-glucosamine. C115 (proton donor) is an active-site residue. C115 carries the post-translational modification 2-(S-cysteinyl)pyruvic acid O-phosphothioketal. Residues 120-124, 160-163, D305, and V327 each bind UDP-N-acetyl-alpha-D-glucosamine; these read RPVDL and KVSV.

The protein belongs to the EPSP synthase family. MurA subfamily.

It is found in the cytoplasm. It carries out the reaction phosphoenolpyruvate + UDP-N-acetyl-alpha-D-glucosamine = UDP-N-acetyl-3-O-(1-carboxyvinyl)-alpha-D-glucosamine + phosphate. The protein operates within cell wall biogenesis; peptidoglycan biosynthesis. Cell wall formation. Adds enolpyruvyl to UDP-N-acetylglucosamine. The polypeptide is UDP-N-acetylglucosamine 1-carboxyvinyltransferase (Escherichia coli O157:H7).